Here is a 273-residue protein sequence, read N- to C-terminus: LOB domain-containing protein 20 (273 aa).

Positions 1-15 (MADQQRGHNTSDSRR) are enriched in basic and acidic residues. A disordered region spans residues 1-39 (MADQQRGHNTSDSRRKSLAGKRTSQQTPTSSLSSGGVSM). Over residues 23 to 39 (TSQQTPTSSLSSGGVSM) the composition is skewed to low complexity. The 103-residue stretch at 50–152 (SPCGACKFLR…AELSVVQSQL (103 aa)) folds into the LOB domain. A disordered region spans residues 221 to 248 (LEHSLQPMPPHQQRRGDYQHEDEEESGA).

The protein belongs to the LOB domain-containing protein family. As to expression, expressed in roots and flowers.

The chain is LOB domain-containing protein 20 (LBD20) from Arabidopsis thaliana (Mouse-ear cress).